The sequence spans 90 residues: UPF0367 protein Ava_2513 (90 aa).

Belongs to the UPF0367 family.

This chain is UPF0367 protein Ava_2513, found in Trichormus variabilis (strain ATCC 29413 / PCC 7937) (Anabaena variabilis).